Reading from the N-terminus, the 306-residue chain is MSHPLIPFRANFLRAPRVLSMEIVAPVITTFRGGRLDPELFANHVKNITSKGVDVVFVAGTTGLGPALSLQEKMELTDAATSAARRVIVQVASLNADEAIALAKYAESRGAEAVASLPPYYFPRLSERQIAKYFRDLCSAVSIPVFLYNYPAAVGRDVDARAAKELGCIRGVKDTNESLAHTLAYKRYLPQARVYNGSDSLVFASFAVRLDGVVASSANYLPELLAGIRDAVAAGDIERARSLQFLLDEIVESARHIGYAAAVYELVEIFQGYEAGEPRGPVYPLDPEEKAWLRAAVAKAKSQLRL.

Residues threonine 61–threonine 62, tyrosine 148–tyrosine 150, and lysine 173–threonine 175 contribute to the substrate site. The Schiff-base intermediate with substrate role is filled by lysine 173.

This sequence belongs to the DapA family. KDPG aldolase subfamily. In terms of assembly, homotetramer; dimer of dimers.

It carries out the reaction 2-dehydro-3-deoxy-6-phospho-D-gluconate = D-glyceraldehyde 3-phosphate + pyruvate. The enzyme catalyses 2-dehydro-3-deoxy-D-gluconate = D-glyceraldehyde + pyruvate. Its pathway is carbohydrate acid metabolism; 2-dehydro-3-deoxy-D-gluconate degradation; D-glyceraldehyde 3-phosphate and pyruvate from 2-dehydro-3-deoxy-D-gluconate: step 2/2. In terms of biological role, involved in the degradation of glucose via the Entner-Doudoroff pathway. Catalyzes the reversible cleavage of 2-keto-3-deoxy-6-phosphogluconate (KDPG) and 2-keto-3-deoxygluconate (KDG) forming pyruvate and glyceraldehyde 3-phosphate or glyceraldehyde, respectively. It is not able to use 2-keto-3-deoxy-6-phosphogalactonate (KDPGal) and 2-keto-3-deoxygalactonate (KDGal) as substrate. This is 2-dehydro-3-deoxy-D-gluconate/2-dehydro-3-deoxy-phosphogluconate aldolase (kdgA) from Thermoproteus tenax.